We begin with the raw amino-acid sequence, 272 residues long: PILR alpha-associated neural protein (272 aa).

The first 27 residues, 1 to 27, serve as a signal peptide directing secretion; sequence MWPAQLLSQLLPLWPLLLLPLSLPAQG. Positions 25 to 93 are disordered; that stretch reads AQGSSHRSPP…PSGFEEGPPS (69 aa). The Extracellular portion of the chain corresponds to 28–174; sequence SSHRSPPAPA…FGGRGEGVDP (147 aa). Thr136 carries an O-linked (GalNAc...) threonine glycan. The chain crosses the membrane as a helical span at residues 175–195; that stretch reads QLYVTITISIIIVLVATGIIF. Residues 196–272 are Cytoplasmic-facing; that stretch reads KFCWDRSQKR…KGAPAFQLNR (77 aa). Residues 205 to 272 are disordered; it reads RRRPSGQQGA…KGAPAFQLNR (68 aa). Positions 209–225 are enriched in polar residues; sequence SGQQGALRQEESQQPLT.

O-glycosylation at Thr-136 is essential for recognition by PILRA.

It localises to the membrane. In terms of biological role, acts as a ligand for PILRA in neuronal tissues, where it may be involved in immune regulation. This Rattus norvegicus (Rat) protein is PILR alpha-associated neural protein (Pianp).